A 1110-amino-acid chain; its full sequence is Envelopment polyprotein (1110 aa).

Residues 1-8 constitute a propeptide that is removed on maturation; sequence MALKETDA. Residues 1–290 are Lumenal-facing; sequence MALKETDAKI…KYSKNIYKQT (290 aa). Residues 14–16 carry the Cell attachment site motif; sequence RGD. N-linked (GlcNAc...) asparagine; by host glycosylation is found at Asn-46 and Asn-92. Cystine bridges form between Cys-90-Cys-121 and Cys-98-Cys-132. Positions 153–171 are non-covalent dimerization; that stretch reads IDNKRKLSIGTKFYIIESL. Asn-186 is a glycosylation site (N-linked (GlcNAc...) asparagine; by host). Cys-200 and Cys-261 are oxidised to a cystine. Residues 291-342 traverse the membrane as a helical segment; sequence ACINFSWFRLIMIALIVYFPIRYLVNKTSKTLFYGYDLLGLITYPILLLINY. The Cytoplasmic segment spans residues 343–459; that stretch reads LWSYFPLKCK…VPGCDRFVTN (117 aa). Residues 460–1044 are Lumenal-facing; sequence RYDKCPEKDQ…HFGSFFDTVR (585 aa). Residues Asn-566, Asn-582, and Asn-957 are each glycosylated (N-linked (GlcNAc...) asparagine; by host). Residues 1045–1065 traverse the membrane as a helical segment; it reads VVLLILFVFALAYLCSIVATM. The Cytoplasmic segment spans residues 1066–1110; it reads CRGYVRNKSYKTKYIEDTNDYSLVSTSSGKDTITRRRPPLDFSGI. A disordered region spans residues 1091–1110; that stretch reads TSSGKDTITRRRPPLDFSGI.

It belongs to the tospovirus envelope glycoprotein family. Homodimer; disulfide-linked. Heterodimer with Glycoprotein C. Interacts with nucleoprotein. As to quaternary structure, heterodimer with Glycoprotein N. Interacts with nucleoprotein. Post-translationally, specific enzymatic cleavages in vivo yield mature proteins including Glycoprotein N and Glycoprotein C. Glycosylated with O-linked glycans. Glycosylation is essential for proper subcellular location. In terms of processing, cleaved at acidic pH.

Its subcellular location is the virion membrane. The protein localises to the host Golgi apparatus membrane. It localises to the host endoplasmic reticulum membrane. Functionally, forms the spikes present at the surface of the virion together with Glycoprotein C. They are able to attach the virion to a cell receptor and to promote fusion of membranes after endocytosis of the virion. Plays a role in virus binding and/or entry into the vector midgut. Forms the spikes present at the surface of the virion together with Glycoprotein N. They are able to attach the virion to a cell receptor and to promote fusion of membranes after endocytosis of the virion. Probable class II fusion protein. This is Envelopment polyprotein (GP) from Impatiens necrotic spot virus (INSV).